We begin with the raw amino-acid sequence, 101 residues long: Large ribosomal subunit protein uL24 (101 aa).

This sequence belongs to the universal ribosomal protein uL24 family. As to quaternary structure, part of the 50S ribosomal subunit.

Functionally, one of two assembly initiator proteins, it binds directly to the 5'-end of the 23S rRNA, where it nucleates assembly of the 50S subunit. One of the proteins that surrounds the polypeptide exit tunnel on the outside of the subunit. In Streptococcus equi subsp. zooepidemicus (strain H70), this protein is Large ribosomal subunit protein uL24.